The sequence spans 276 residues: Large ribosomal subunit protein uL2 (276 aa).

Disordered stretches follow at residues 37 to 59 and 225 to 276; these read QIQK…GGHK and VMNP…RHKR. Residues 39–49 are compositionally biased toward polar residues; that stretch reads QKSGRNNNGHI. The span at 50-59 shows a compositional bias: basic residues; the sequence is TTRHKGGGHK.

It belongs to the universal ribosomal protein uL2 family. In terms of assembly, part of the 50S ribosomal subunit. Forms a bridge to the 30S subunit in the 70S ribosome.

Functionally, one of the primary rRNA binding proteins. Required for association of the 30S and 50S subunits to form the 70S ribosome, for tRNA binding and peptide bond formation. It has been suggested to have peptidyltransferase activity; this is somewhat controversial. Makes several contacts with the 16S rRNA in the 70S ribosome. The chain is Large ribosomal subunit protein uL2 from Ralstonia pickettii (strain 12J).